Here is a 576-residue protein sequence, read N- to C-terminus: Proline--tRNA ligase (576 aa).

The protein belongs to the class-II aminoacyl-tRNA synthetase family. ProS type 1 subfamily. In terms of assembly, homodimer.

It is found in the cytoplasm. The enzyme catalyses tRNA(Pro) + L-proline + ATP = L-prolyl-tRNA(Pro) + AMP + diphosphate. Functionally, catalyzes the attachment of proline to tRNA(Pro) in a two-step reaction: proline is first activated by ATP to form Pro-AMP and then transferred to the acceptor end of tRNA(Pro). As ProRS can inadvertently accommodate and process non-cognate amino acids such as alanine and cysteine, to avoid such errors it has two additional distinct editing activities against alanine. One activity is designated as 'pretransfer' editing and involves the tRNA(Pro)-independent hydrolysis of activated Ala-AMP. The other activity is designated 'posttransfer' editing and involves deacylation of mischarged Ala-tRNA(Pro). The misacylated Cys-tRNA(Pro) is not edited by ProRS. In Pelobacter propionicus (strain DSM 2379 / NBRC 103807 / OttBd1), this protein is Proline--tRNA ligase.